The primary structure comprises 428 residues: Glutamyl-tRNA reductase (428 aa).

Substrate is bound by residues 49-52 (TCNR), serine 109, 114-116 (EGQ), and glutamine 120. Catalysis depends on cysteine 50, which acts as the Nucleophile. 189–194 (GAGKMA) serves as a coordination point for NADP(+).

Belongs to the glutamyl-tRNA reductase family. In terms of assembly, homodimer.

The enzyme catalyses (S)-4-amino-5-oxopentanoate + tRNA(Glu) + NADP(+) = L-glutamyl-tRNA(Glu) + NADPH + H(+). It functions in the pathway porphyrin-containing compound metabolism; protoporphyrin-IX biosynthesis; 5-aminolevulinate from L-glutamyl-tRNA(Glu): step 1/2. Its pathway is porphyrin-containing compound metabolism; chlorophyll biosynthesis. In terms of biological role, catalyzes the NADPH-dependent reduction of glutamyl-tRNA(Glu) to glutamate 1-semialdehyde (GSA). The sequence is that of Glutamyl-tRNA reductase from Rippkaea orientalis (strain PCC 8801 / RF-1) (Cyanothece sp. (strain PCC 8801)).